Here is a 94-residue protein sequence, read N- to C-terminus: U27-theraphotoxin-Cg1a (94 aa).

An N-terminal signal peptide occupies residues Met1 to Gly22. A propeptide spanning residues Asp23–Arg58 is cleaved from the precursor. Disulfide bonds link Cys60–Cys78, Cys67–Cys83, and Cys77–Cys88.

It belongs to the neurotoxin 14 (magi-1) family. OAIP-1 subfamily. Expressed by the venom gland.

It is found in the secreted. Its function is as follows. Probable ion channel inhibitor. This Chilobrachys guangxiensis (Chinese earth tiger tarantula) protein is U27-theraphotoxin-Cg1a.